We begin with the raw amino-acid sequence, 131 residues long: Glycine cleavage system H protein (131 aa).

The 83-residue stretch at 24-106 (RVTVGISDHA…YGEGWMFVVE (83 aa)) folds into the Lipoyl-binding domain. Position 65 is an N6-lipoyllysine (lysine 65).

The protein belongs to the GcvH family. The glycine cleavage system is composed of four proteins: P, T, L and H. The cofactor is (R)-lipoate.

The glycine cleavage system catalyzes the degradation of glycine. The H protein shuttles the methylamine group of glycine from the P protein to the T protein. The sequence is that of Glycine cleavage system H protein from Stenotrophomonas maltophilia (strain K279a).